The following is a 216-amino-acid chain: MQEFIAFNEQRAEIYWWMSSLLARELTNEDVTEYHGDEMFTFLSGLGMTPELKEPVEAFRNAINTLKTREDAQLELAADFCGLFLSTPKSGALPYASIYVGESGLLNDKPAQDMNVLMEEYGIAQRKEFNEPADHIAVELDFMGNLIIQANQELDEEKREALMQAQLAFVNDMLLNWIPAFAQSCKARDDFGFYTASVNLLVAFCQLDAAFLLGEE.

The protein belongs to the TorD/DmsD family. TorD subfamily.

The protein localises to the cytoplasm. Involved in the biogenesis of TorA. Acts on TorA before the insertion of the molybdenum cofactor and, as a result, probably favors a conformation of the apoenzyme that is competent for acquiring the cofactor. This chain is Chaperone protein TorD, found in Photobacterium profundum (strain SS9).